Reading from the N-terminus, the 353-residue chain is tRNA-specific 2-thiouridylase MnmA 2 (353 aa).

6-13 is a binding site for ATP; that stretch reads LLSGGVDS. Residues 92-94 form an interaction with target base in tRNA region; that stretch reads NPD. The active-site Nucleophile is the C97. A disulfide bond links C97 and C192. ATP is bound at residue G120. An interaction with tRNA region spans residues 142–144; sequence KDQ. C192 (cysteine persulfide intermediate) is an active-site residue.

The protein belongs to the MnmA/TRMU family.

Its subcellular location is the cytoplasm. It carries out the reaction S-sulfanyl-L-cysteinyl-[protein] + uridine(34) in tRNA + AH2 + ATP = 2-thiouridine(34) in tRNA + L-cysteinyl-[protein] + A + AMP + diphosphate + H(+). Functionally, catalyzes the 2-thiolation of uridine at the wobble position (U34) of tRNA, leading to the formation of s(2)U34. The polypeptide is tRNA-specific 2-thiouridylase MnmA 2 (Bacteroides fragilis (strain ATCC 25285 / DSM 2151 / CCUG 4856 / JCM 11019 / LMG 10263 / NCTC 9343 / Onslow / VPI 2553 / EN-2)).